Here is a 318-residue protein sequence, read N- to C-terminus: Extracellular metalloprotease AO090012001025 (318 aa).

Positions 1–23 (MSHFPTLHILILVIANLQIQCFA) are cleaved as a signal peptide. N-linked (GlcNAc...) asparagine glycosylation is found at Asn106, Asn121, and Asn193. Zn(2+) is bound at residue His229. Residue Glu230 is part of the active site. His233 contacts Zn(2+). A disulfide bond links Cys268 and Cys295.

This sequence belongs to the peptidase M43B family.

It localises to the secreted. Secreted metalloproteinase that allows assimilation of proteinaceous substrates. The polypeptide is Extracellular metalloprotease AO090012001025 (Aspergillus oryzae (strain ATCC 42149 / RIB 40) (Yellow koji mold)).